An 87-amino-acid chain; its full sequence is U24 protein (87 aa).

Thr6 carries the phosphothreonine modification. A PPXY motif motif is present at residues 8-11 (PPSY). A helical transmembrane segment spans residues 59–79 (FLVLTGLAIAMILFIVFVLYV).

Interacts with host ITCH; this interaction probably mediates ITCH degradation. Interacts probably with NEDD4.

It localises to the membrane. Its function is as follows. Down-regulates the TCR/CD3E complex and the transferrin receptor TFRC in host T-cells by blocking them from recycling back to the cell surface. The sequence is that of U24 protein (U24) from Homo sapiens (Human).